Here is a 344-residue protein sequence, read N- to C-terminus: Probable aldo-keto reductase 1 (344 aa).

The active-site Proton donor is the Tyr63. His130 is a substrate binding site. Ser209 to Gly219 provides a ligand contact to NADP(+).

This sequence belongs to the aldo/keto reductase family.

The protein is Probable aldo-keto reductase 1 of Arabidopsis thaliana (Mouse-ear cress).